The sequence spans 352 residues: MDRTETRFRKRGQIKGKITTSRQPHPQNEQSPQRSTSGYSLQEVVDDEVLGSSAPGVDPSPPCRSLGWKRKKEWSDESEEEPEKELAPEPEETWVVEMLCGLKMKLKQQRVSPILPEHHKDFNSQLAPGVDPSPPHRSFCWKRKREWWDESEESLEEEPRKVLAPEPEEIWVVEMLCGLKMKLKRRRVSLVLPEHHEAFNRLLEDPVIKRFLAWDKDLRVSDKYLLAMVIAYFSRAGLPSWQYQRIHFFLALYLANDMEEDDEDPKQNIFYFLYGKTRSRIPLVRNRRFQLCRCMNPRARKNRSQIALFQKLRFQFFCSMSGRAWVSREELEEIQAYDPEHWVWARDRARLS.

Residues M1–P90 are disordered. Residues I18 to S40 show a composition bias toward polar residues. The span at D76–P90 shows a compositional bias: acidic residues.

The protein belongs to the Speedy/Ringo family.

This Homo sapiens (Human) protein is Speedy protein E16.